Consider the following 166-residue polypeptide: Peptidyl-prolyl cis-trans isomerase-like 1 (166 aa).

In terms of domain architecture, PPIase cyclophilin-type spans 10 to 164 (QPPNVYLETS…DDVKILKAYP (155 aa)). Cyclosporin A is bound by residues 54 to 65 (HRIIKDFMIQGG), 70 to 71 (TG), 99 to 104 (AMANAG), 109 to 113 (GSQFF), threonine 119, and lysine 125. A Phosphoserine modification is found at serine 149.

It belongs to the cyclophilin-type PPIase family. PPIL1 subfamily. As to quaternary structure, identified in the spliceosome C complex. Interacts with SNW1/SKIP. Interacts with CDC40/PRP17; this interaction leads to CDC40 isomerization. Interacts with RBM22.

The protein localises to the nucleus. It catalyses the reaction [protein]-peptidylproline (omega=180) = [protein]-peptidylproline (omega=0). With respect to regulation, inhibited by Cyclosporin A. Its function is as follows. Involved in pre-mRNA splicing as component of the spliceosome. PPIases accelerate the folding of proteins. It catalyzes the cis-trans isomerization of proline imidic peptide bonds in oligopeptides. Catalyzes prolyl peptide bond isomerization in CDC40/PRP17. Plays an important role in embryonic brain development; this function is independent of its isomerase activity. The chain is Peptidyl-prolyl cis-trans isomerase-like 1 (Ppil1) from Mus musculus (Mouse).